Here is a 186-residue protein sequence, read N- to C-terminus: Ribosome-recycling factor (186 aa).

This sequence belongs to the RRF family.

It is found in the cytoplasm. Its function is as follows. Responsible for the release of ribosomes from messenger RNA at the termination of protein biosynthesis. May increase the efficiency of translation by recycling ribosomes from one round of translation to another. This Leifsonia xyli subsp. xyli (strain CTCB07) protein is Ribosome-recycling factor.